Reading from the N-terminus, the 65-residue chain is Large ribosomal subunit protein bL35 (65 aa).

It belongs to the bacterial ribosomal protein bL35 family.

In Ruminiclostridium cellulolyticum (strain ATCC 35319 / DSM 5812 / JCM 6584 / H10) (Clostridium cellulolyticum), this protein is Large ribosomal subunit protein bL35.